The following is a 395-amino-acid chain: Protein hedgehog (395 aa).

Positions 1–26 (MDNHSSVPWASAASVTCLSLDAKCHS) are cleaved as a signal peptide. A compositionally biased stretch (low complexity) spans 26-43 (SSSSSCSSKSTASSISAS). Residues 26-46 (SSSSSCSSKSTASSISASPET) form a disordered region. Positions 27-82 (SSSSCSSKSTASSISASPETQTMRHIAHTQRCLSRLTSLVALLLIVLPMMFSPAHS) are excised as a propeptide. Cysteine 83 carries the N-palmitoyl cysteine lipid modification. 7 residues coordinate Ca(2+): glutamate 147, glutamate 148, aspartate 153, threonine 183, glutamate 184, aspartate 187, and aspartate 189. Glycine 255 carries Cholesterol glycine ester lipidation.

This sequence belongs to the hedgehog family. As to quaternary structure, interacts with shf. In terms of processing, the C-terminal part of the hedgehog protein precursor displays an autoproteolysis activity that results in the cleavage of the full-length protein into two parts (N-product and C-product). In addition, the C-terminal part displays a cholesterol transferase activity that results by the covalent attachment of a cholesterol moiety to the C-terminal of the newly generated N-product. The N-product is the active species in both local and long-range signaling, whereas the C-product has no signaling activity. Post-translationally, cholesterylation is required for N-product targeting to lipid rafts and multimerization. N-palmitoylation by Rasp of the hedgehog N-product, within the secretory pathway, is required for the embryonic and larval patterning activities of the hedgehog signal.

It localises to the nucleus. The protein resides in the cytoplasm. Its subcellular location is the cell membrane. It catalyses the reaction glycyl-L-cysteinyl-[protein] + cholesterol + H(+) = [protein]-C-terminal glycyl cholesterol ester + N-terminal L-cysteinyl-[protein]. In terms of biological role, the C-terminal part of the hedgehog protein precursor displays an autoproteolysis activity that results in the cleavage of the full-length protein into two parts (N-product and C-product). In addition, the C-terminal part displays a cholesterol transferase activity that results by the covalent attachment of a cholesterol moiety to the C-terminal of the newly generated N-product. Once cleaved, the C-product has no signaling activity and diffuses from the cell. Its function is as follows. The dually lipidated hedgehog protein N-product is a morphogen which is essential for a variety of patterning events during development. Establishes the anterior-posterior axis of the embryonic segments and patterns the larval imaginal disks. Binds to the patched (ptc) receptor, which functions in association with smoothened (smo), to activate the transcription of target genes wingless (wg), decapentaplegic (dpp) and ptc. In the absence of hh, ptc represses the constitutive signaling activity of smo through fused (fu). Essential component of a signaling pathway which regulates the Duox-dependent gut immune response to bacterial uracil; required to activate Cad99C-dependent endosome formation, norpA-dependent Ca2+ mobilization and p38 MAPK, which are essential steps in the Duox-dependent production of reactive oxygen species (ROS) in response to intestinal bacterial infection. During photoreceptor differentiation, it up-regulates transcription of Ubr3, which in turn promotes the hh-signaling pathway by mediating the ubiquitination and degradation of cos. The polypeptide is Protein hedgehog (Drosophila simulans (Fruit fly)).